Here is a 95-residue protein sequence, read N- to C-terminus: Putative septation protein SpoVG (95 aa).

It belongs to the SpoVG family.

Its function is as follows. Could be involved in septation. This Clostridium acetobutylicum (strain ATCC 824 / DSM 792 / JCM 1419 / IAM 19013 / LMG 5710 / NBRC 13948 / NRRL B-527 / VKM B-1787 / 2291 / W) protein is Putative septation protein SpoVG.